The chain runs to 180 residues: Stathmin-3 (180 aa).

Residues Cys-22 and Cys-24 are each lipidated (S-palmitoyl cysteine). The SLD domain maps to 38–180 (GDMEVKQLDK…NKEQREEMSG (143 aa)). Residues Ser-50, Ser-60, Ser-65, Ser-68, Ser-72, Ser-73, and Ser-81 each carry the phosphoserine modification. Low complexity predominate over residues 60 to 74 (SPSDLSPESPVLSSP). The interval 60-81 (SPSDLSPESPVLSSPPKRKDAS) is disordered. Residues 75-179 (PKRKDASLEE…RNKEQREEMS (105 aa)) adopt a coiled-coil conformation.

Belongs to the stathmin family. Interacts with STAT3. Interacts with CLU (secreted form); this interaction may act as an important modulator during neuronal differentiation. Post-translationally, N-terminal palmitoylation promotes specific anchoring to the cytosolic leaflet of Golgi membranes and subsequent vesicular trafficking along dendrites and axons. Neuronal Stathmins are substrates for palmitoyltransferases ZDHHC3, ZDHHC7 and ZDHHC15. As to expression, neuron specific.

It localises to the golgi apparatus. The protein localises to the cell projection. The protein resides in the growth cone. It is found in the axon. Its subcellular location is the cytoplasm. It localises to the cytosol. Exhibits microtubule-destabilizing activity, which is antagonized by STAT3. The polypeptide is Stathmin-3 (Stmn3) (Mus musculus (Mouse)).